Here is a 534-residue protein sequence, read N- to C-terminus: (E)-beta-farnesene synthase (534 aa).

5 residues coordinate Mg(2+): Asp-287, Asp-291, Asn-431, Ser-435, and Glu-439. Positions Asp-287–Asp-291 match the DDXXD motif motif.

This sequence belongs to the terpene synthase family. Requires Mg(2+) as cofactor. Co(2+) is required as a cofactor. It depends on Mn(2+) as a cofactor.

The protein localises to the cytoplasm. The catalysed reaction is (2E,6E)-farnesyl diphosphate = (E)-beta-farnesene + diphosphate. It functions in the pathway secondary metabolite biosynthesis; terpenoid biosynthesis. In terms of biological role, sesquiterpene cyclase catalyzing the production of beta-farnesene and alpha-bergamotene in equal amounts from farnesyl diphosphate. Involved in indirect defense by producing volatile signals attracting natural enemies of herbivores. The chain is (E)-beta-farnesene synthase from Zea mays subsp. mexicana (Mexican teosinte).